We begin with the raw amino-acid sequence, 367 residues long: uncharacterized protein (367 aa).

It belongs to the mimivirus L17x/L18x family.

This is an uncharacterized protein from Acanthamoeba polyphaga (Amoeba).